A 155-amino-acid chain; its full sequence is Endoribonuclease YbeY (155 aa).

3 residues coordinate Zn(2+): histidine 119, histidine 123, and histidine 129.

This sequence belongs to the endoribonuclease YbeY family. It depends on Zn(2+) as a cofactor.

It localises to the cytoplasm. Its function is as follows. Single strand-specific metallo-endoribonuclease involved in late-stage 70S ribosome quality control and in maturation of the 3' terminus of the 16S rRNA. The protein is Endoribonuclease YbeY of Mycoplasmopsis synoviae (strain 53) (Mycoplasma synoviae).